Reading from the N-terminus, the 298-residue chain is Nitrogenase iron protein (298 aa).

An ATP-binding site is contributed by 13–20 (GKGGIGKS). Cys101 lines the [4Fe-4S] cluster pocket. At Arg104 the chain carries ADP-ribosylarginine; by dinitrogenase reductase ADP-ribosyltransferase. Cys135 serves as a coordination point for [4Fe-4S] cluster.

Belongs to the NifH/BchL/ChlL family. Homodimer. [4Fe-4S] cluster serves as cofactor. In terms of processing, the reversible ADP-ribosylation of Arg-104 inactivates the nitrogenase reductase and regulates nitrogenase activity.

The catalysed reaction is N2 + 8 reduced [2Fe-2S]-[ferredoxin] + 16 ATP + 16 H2O = H2 + 8 oxidized [2Fe-2S]-[ferredoxin] + 2 NH4(+) + 16 ADP + 16 phosphate + 6 H(+). In terms of biological role, the key enzymatic reactions in nitrogen fixation are catalyzed by the nitrogenase complex, which has 2 components: the iron protein and the molybdenum-iron protein. In Cyanothece sp. (strain PCC 7425 / ATCC 29141), this protein is Nitrogenase iron protein.